Consider the following 377-residue polypeptide: F-box protein At2g05970 (377 aa).

One can recognise an F-box domain in the interval 8 to 55; the sequence is ASWSELCPDVLRCVFELLSFSDLNRTRSVCSSWHSASRHCVPTQNQIP.

The polypeptide is F-box protein At2g05970 (Arabidopsis thaliana (Mouse-ear cress)).